The primary structure comprises 141 residues: Large ribosomal subunit protein uL16 (141 aa).

The protein belongs to the universal ribosomal protein uL16 family. In terms of assembly, part of the 50S ribosomal subunit.

In terms of biological role, binds 23S rRNA and is also seen to make contacts with the A and possibly P site tRNAs. The sequence is that of Large ribosomal subunit protein uL16 from Petrotoga mobilis (strain DSM 10674 / SJ95).